We begin with the raw amino-acid sequence, 1336 residues long: Misshapen-like kinase 1 (1336 aa).

A Protein kinase domain is found at 25–289 (FELVEVVGNG…TEQLLKFPFI (265 aa)). Residues 31–39 (VGNGTYGQV) and Lys-54 contribute to the ATP site. The active-site Proton acceptor is the Asp-153. Disordered regions lie at residues 299–347 (RIQL…NVPG), 363–383 (KSNSEALKQQQQLQQQQQRDP), and 395–890 (QRRI…GGTM). Residues 317 to 333 (EETEYEYSGSEEEDDSH) show a composition bias toward acidic residues. 2 positions are modified to phosphoserine: Ser-324 and Ser-326. Residues 371–380 (QQQQLQQQQQ) show a composition bias toward low complexity. Basic and acidic residues predominate over residues 396 to 466 (RRIEEQKEER…EEQRQSERLQ (71 aa)). Over residues 479-496 (QKQQQQQQQQQQQQQQQQ) the composition is skewed to low complexity. 2 positions are modified to omega-N-methylarginine: Arg-502 and Arg-510. Residues 519-529 (AWAREVEERAR) show a composition bias toward basic and acidic residues. Residues 531 to 544 (NKQQNSPLAKTKPS) show a composition bias toward polar residues. Pro residues predominate over residues 548 to 562 (PEPPIPQASPSPPGP). The span at 599-609 (RSQSLQDQPTR) shows a compositional bias: polar residues. The span at 622-632 (PAAVPTPTATP) shows a compositional bias: low complexity. Residue Ser-643 is modified to Phosphoserine. The span at 672-684 (QRTSSIATALNTS) shows a compositional bias: polar residues. Position 703 is a phosphoserine (Ser-703). Residues 718 to 731 (PKPPGPPAQPPGPP) show a composition bias toward pro residues. Residues 738 to 750 (DLRRSDPGWERSD) show a composition bias toward basic and acidic residues. Phosphoserine occurs at positions 756, 765, 781, 782, and 786. Positions 808–825 (LLKERTLDEAPKPPKKAM) are enriched in basic and acidic residues. Positions 832–848 (EEVESSEDEEEEGDGEP) are enriched in acidic residues. Residues 870–1336 (MVVHDVEEVS…TLNRNCIMNW (467 aa)) are mediates interaction with RAP2A. Thr-895 is subject to Phosphothreonine. Residues 909-946 (GYTNLPDVVQPSHSPTENSQGQSPPTKDGGGDYQSRGL) form a disordered region. Residues 919–933 (PSHSPTENSQGQSPP) show a composition bias toward polar residues. In terms of domain architecture, CNH spans 1023–1310 (NSEILCAALW…KFLCERNDKV (288 aa)).

This sequence belongs to the protein kinase superfamily. STE Ser/Thr protein kinase family. STE20 subfamily. As to quaternary structure, interacts with RAP2A and NCK1. Interacts with TANC1. Mg(2+) serves as cofactor. In terms of processing, autophosphorylated.

The protein localises to the cytoplasm. It localises to the postsynaptic density. Its subcellular location is the cell projection. The protein resides in the axon. It is found in the dendrite. The catalysed reaction is L-seryl-[protein] + ATP = O-phospho-L-seryl-[protein] + ADP + H(+). The enzyme catalyses L-threonyl-[protein] + ATP = O-phospho-L-threonyl-[protein] + ADP + H(+). Its function is as follows. Serine/threonine kinase which acts as a negative regulator of Ras-related Rap2-mediated signal transduction to control neuronal structure and AMPA receptor trafficking. Required for normal synaptic density, dendrite complexity, as well as surface AMPA receptor expression in hippocampal neurons. Can activate the JNK and MAPK14/p38 pathways and mediates stimulation of the stress-activated protein kinase MAPK14/p38 MAPK downstream of the Raf/ERK pathway. Phosphorylates TANC1 upon stimulation by RAP2A, MBP and SMAD1. Has an essential function in negative selection of thymocytes, perhaps by coupling NCK1 to activation of JNK1. Activator of the Hippo signaling pathway which plays a pivotal role in organ size control and tumor suppression by restricting proliferation and promoting apoptosis. MAP4Ks act in parallel to and are partially redundant with STK3/MST2 and STK4/MST2 in the phosphorylation and activation of LATS1/2, and establish MAP4Ks as components of the expanded Hippo pathway. The polypeptide is Misshapen-like kinase 1 (Mink1) (Rattus norvegicus (Rat)).